The chain runs to 278 residues: Shikimate dehydrogenase (NADP(+)) (278 aa).

Shikimate-binding positions include 18-20 (SKS) and threonine 65. The Proton acceptor role is filled by lysine 69. Glutamate 81 is a binding site for NADP(+). The shikimate site is built by asparagine 90 and aspartate 106. Residues 130–134 (GAGGA) and 154–159 (NRTFAK) contribute to the NADP(+) site. Tyrosine 223 contributes to the shikimate binding site. NADP(+) is bound at residue glycine 241.

Belongs to the shikimate dehydrogenase family. In terms of assembly, homodimer.

The catalysed reaction is shikimate + NADP(+) = 3-dehydroshikimate + NADPH + H(+). The protein operates within metabolic intermediate biosynthesis; chorismate biosynthesis; chorismate from D-erythrose 4-phosphate and phosphoenolpyruvate: step 4/7. Involved in the biosynthesis of the chorismate, which leads to the biosynthesis of aromatic amino acids. Catalyzes the reversible NADPH linked reduction of 3-dehydroshikimate (DHSA) to yield shikimate (SA). In Vibrio cholerae serotype O1 (strain ATCC 39541 / Classical Ogawa 395 / O395), this protein is Shikimate dehydrogenase (NADP(+)).